The primary structure comprises 595 residues: Adenine deaminase 2 (595 aa).

The protein belongs to the metallo-dependent hydrolases superfamily. Adenine deaminase family. It depends on Mn(2+) as a cofactor.

It carries out the reaction adenine + H2O + H(+) = hypoxanthine + NH4(+). In Rhizobium johnstonii (strain DSM 114642 / LMG 32736 / 3841) (Rhizobium leguminosarum bv. viciae), this protein is Adenine deaminase 2.